The sequence spans 517 residues: Bifunctional purine biosynthesis protein PurH (517 aa).

The MGS-like domain maps to 1-145; it reads MSPLALVSVS…KNHKDVSVLV (145 aa).

The protein belongs to the PurH family.

The catalysed reaction is (6R)-10-formyltetrahydrofolate + 5-amino-1-(5-phospho-beta-D-ribosyl)imidazole-4-carboxamide = 5-formamido-1-(5-phospho-D-ribosyl)imidazole-4-carboxamide + (6S)-5,6,7,8-tetrahydrofolate. The enzyme catalyses IMP + H2O = 5-formamido-1-(5-phospho-D-ribosyl)imidazole-4-carboxamide. Its pathway is purine metabolism; IMP biosynthesis via de novo pathway; 5-formamido-1-(5-phospho-D-ribosyl)imidazole-4-carboxamide from 5-amino-1-(5-phospho-D-ribosyl)imidazole-4-carboxamide (10-formyl THF route): step 1/1. It functions in the pathway purine metabolism; IMP biosynthesis via de novo pathway; IMP from 5-formamido-1-(5-phospho-D-ribosyl)imidazole-4-carboxamide: step 1/1. The protein is Bifunctional purine biosynthesis protein PurH of Prochlorococcus marinus (strain MIT 9301).